The chain runs to 253 residues: ER membrane protein complex subunit 3 (253 aa).

The next 3 membrane-spanning stretches (helical) occupy residues 10–30 (WVLL…QYIM), 126–146 (FIPQ…FILM), and 176–196 (SISW…LIGL).

This sequence belongs to the EMC3 family. In terms of assembly, component of the ER membrane protein complex (EMC), which is composed of EMC1, EMC2, EMC3, EMC4, EMC5 and EMC6.

The protein localises to the endoplasmic reticulum membrane. The EMC seems to be required for efficient folding of proteins in the endoplasmic reticulum (ER). This chain is ER membrane protein complex subunit 3 (AIM27), found in Saccharomyces cerevisiae (strain YJM789) (Baker's yeast).